Here is a 192-residue protein sequence, read N- to C-terminus: Small ribosomal subunit protein uS4c-2 (192 aa).

Residues 91-155 (TRLDHLVYRA…PKPPEYLPPY (65 aa)) form the S4 RNA-binding domain.

Belongs to the universal ribosomal protein uS4 family. In terms of assembly, part of the 30S ribosomal subunit. Contacts protein S5. The interaction surface between S4 and S5 is involved in control of translational fidelity.

The protein resides in the plastid. The protein localises to the chloroplast. One of the primary rRNA binding proteins, it binds directly to 16S rRNA where it nucleates assembly of the body of the 30S subunit. Functionally, with S5 and S12 plays an important role in translational accuracy. This is Small ribosomal subunit protein uS4c-2 from Cyanidium caldarium (Red alga).